The following is a 500-amino-acid chain: Putative beta-glucosidase 5 (500 aa).

An N-terminal signal peptide occupies residues 1–20; it reads MEQFFALFTIFLSFAFPGRC. A beta-D-glucoside is bound by residues Gln-43, His-140, and 185 to 186; that span reads NE. Catalysis depends on Glu-186, which acts as the Proton donor. The cysteines at positions 205 and 212 are disulfide-linked. A glycan (N-linked (GlcNAc...) asparagine) is linked at Asn-216. Tyr-328 is a binding site for a beta-D-glucoside. Asn-361 is a glycosylation site (N-linked (GlcNAc...) asparagine). Glu-394 contributes to the a beta-D-glucoside binding site. Glu-394 serves as the catalytic Nucleophile. An N-linked (GlcNAc...) asparagine glycan is attached at Asn-424. A beta-D-glucoside is bound by residues Trp-434 and Tyr-450. N-linked (GlcNAc...) asparagine glycosylation is found at Asn-456 and Asn-495.

The protein belongs to the glycosyl hydrolase 1 family.

The enzyme catalyses Hydrolysis of terminal, non-reducing beta-D-glucosyl residues with release of beta-D-glucose.. This chain is Putative beta-glucosidase 5, found in Arabidopsis thaliana (Mouse-ear cress).